A 624-amino-acid chain; its full sequence is LRR receptor kinase BAK1 (624 aa).

The signal sequence occupies residues 1–25 (MAAPRWAVWAVLLLRLLVPAARVLA). The Extracellular segment spans residues 26 to 237 (NMEGDALHSL…QSPGSSSSTG (212 aa)). 4 LRR repeats span residues 91 to 115 (LKNL…LGNL), 117 to 139 (NLVS…LGNL), 140 to 163 (LKLR…LTAI), and 164 to 188 (TALQ…SFSL). 5 N-linked (GlcNAc...) asparagine glycosylation sites follow: N103, N114, N127, N149, and N175. The tract at residues 205-236 (TTKPCPGAPPFSPPPPYNPPTPVQSPGSSSST) is disordered. The segment covering 210-227 (PGAPPFSPPPPYNPPTPV) has biased composition (pro residues). A helical transmembrane segment spans residues 238–258 (AIAGGVAAGAALLFAIPAIGF). Topologically, residues 259–624 (AWYRRRKPQE…LHAVELSGPR (366 aa)) are cytoplasmic. A Protein kinase domain is found at 301-588 (FSNKNILGRG…GLAERWEEWQ (288 aa)). ATP contacts are provided by residues 307–315 (LGRGGFGKV) and K329. Residue D428 is the Proton acceptor of the active site.

It belongs to the protein kinase superfamily. Ser/Thr protein kinase family. Forms homodimers. Interacts with BRI1. Interacts with REM4.1.

It is found in the cell membrane. The catalysed reaction is L-seryl-[protein] + ATP = O-phospho-L-seryl-[protein] + ADP + H(+). It carries out the reaction L-threonyl-[protein] + ATP = O-phospho-L-threonyl-[protein] + ADP + H(+). LRR receptor kinase involved in defense response. Does not seem to be required specifically for XA21-mediated immunity or basal resistance to Xanthomonas oryzae pv. oryzae (Xoo), or immunity to Magnaporthe oryzae. Involved in brassinosteroid (BR) signaling pathway. Acts as a coreceptor of BRI1. Forms at the plasma membrane a receptor complex with BRI1 which is activated in response to brassinolide. Phosphorylates BRI1. Required for normal plant growth and leaf development. Possesses kinase activity in vitro. The protein is LRR receptor kinase BAK1 of Oryza sativa subsp. indica (Rice).